The primary structure comprises 158 residues: ATP synthase subunit delta, mitochondrial (158 aa).

The N-terminal 22 residues, 1–22, are a transit peptide targeting the mitochondrion; it reads MFRLTSARALFRVANVAARRTY.

This sequence belongs to the ATPase epsilon chain family. In terms of assembly, F-type ATPases have 2 components, CF(1) - the catalytic core - and CF(0) - the membrane proton channel. CF(1) has five subunits: alpha(3), beta(3), gamma(1), delta(1), epsilon(1). CF(0) has three main subunits: a, b and c.

It localises to the mitochondrion. The protein localises to the mitochondrion inner membrane. Functionally, mitochondrial membrane ATP synthase (F(1)F(0) ATP synthase or Complex V) produces ATP from ADP in the presence of a proton gradient across the membrane which is generated by electron transport complexes of the respiratory chain. F-type ATPases consist of two structural domains, F(1) - containing the extramembraneous catalytic core, and F(0) - containing the membrane proton channel, linked together by a central stalk and a peripheral stalk. During catalysis, ATP turnover in the catalytic domain of F(1) is coupled via a rotary mechanism of the central stalk subunits to proton translocation. Part of the complex F(1) domain and of the central stalk which is part of the complex rotary element. Rotation of the central stalk against the surrounding alpha(3)beta(3) subunits leads to hydrolysis of ATP in three separate catalytic sites on the beta subunits. The polypeptide is ATP synthase subunit delta, mitochondrial (ATP16) (Eremothecium gossypii (strain ATCC 10895 / CBS 109.51 / FGSC 9923 / NRRL Y-1056) (Yeast)).